The sequence spans 192 residues: Adenylate kinase (192 aa).

10–18 (GVPGVGGTT) lines the ATP pocket.

The protein belongs to the archaeal adenylate kinase family. As to quaternary structure, monomer.

Its subcellular location is the cytoplasm. It carries out the reaction AMP + ATP = 2 ADP. The sequence is that of Adenylate kinase (adkA) from Methanotorris igneus (Methanococcus igneus).